The sequence spans 319 residues: DNA-directed RNA polymerases IV and V subunit 3B (319 aa).

Methionine 1 carries the post-translational modification N-acetylmethionine.

This sequence belongs to the archaeal Rpo3/eukaryotic RPB3 RNA polymerase subunit family. As to quaternary structure, component of the RNA polymerase IV and V complexes. Interacts with NRPB11, SHH1, GRP23 and NRPD1.

The protein resides in the nucleus. In terms of biological role, DNA-dependent RNA polymerase catalyzes the transcription of DNA into RNA using the four ribonucleoside triphosphates as substrates. Component of RNA polymerases IV and V which mediate short-interfering RNAs (siRNA) accumulation and subsequent RNA-directed DNA methylation-dependent (RdDM) transcriptional gene silencing (TGS) of endogenous repeated sequences, including transposable elements. This chain is DNA-directed RNA polymerases IV and V subunit 3B (NRPD3B), found in Arabidopsis thaliana (Mouse-ear cress).